A 65-amino-acid polypeptide reads, in one-letter code: Large ribosomal subunit protein bL35 (65 aa).

It belongs to the bacterial ribosomal protein bL35 family.

This is Large ribosomal subunit protein bL35 from Nitrosomonas europaea (strain ATCC 19718 / CIP 103999 / KCTC 2705 / NBRC 14298).